We begin with the raw amino-acid sequence, 309 residues long: Porphobilinogen deaminase (309 aa).

An S-(dipyrrolylmethanemethyl)cysteine modification is found at Cys242.

This sequence belongs to the HMBS family. In terms of assembly, monomer. The cofactor is dipyrromethane.

It carries out the reaction 4 porphobilinogen + H2O = hydroxymethylbilane + 4 NH4(+). The protein operates within porphyrin-containing compound metabolism; protoporphyrin-IX biosynthesis; coproporphyrinogen-III from 5-aminolevulinate: step 2/4. Tetrapolymerization of the monopyrrole PBG into the hydroxymethylbilane pre-uroporphyrinogen in several discrete steps. This is Porphobilinogen deaminase from Legionella pneumophila (strain Paris).